A 578-amino-acid polypeptide reads, in one-letter code: Keratin, type II cytoskeletal 1b (578 aa).

Residues 1–163 are head; sequence MSHQFSSQSA…DPEIQRIKTQ (163 aa). Position 95 is an omega-N-methylarginine (R95). The coil 1A stretch occupies residues 164–200; that stretch reads EREQIMVLNNKFASFIDKVRFLEQQNQVLQTKWELLQ. An IF rod domain is found at 164–477; that stretch reads EREQIMVLNN…QLLEGEESRM (314 aa). A linker 1 region spans residues 201–219; the sequence is QVNTSTGTNNLEPLLENYI. The interval 220-311 is coil 1B; that stretch reads GDLRRQVDLL…LFLTELSQVQ (92 aa). The tract at residues 312–335 is linker 12; sequence THISDTNVILSMDNNRSLDLDSII. The interval 336 to 474 is coil 2; that stretch reads DAVRTQYELI…TYRQLLEGEE (139 aa). Residues 475 to 578 form a tail region; the sequence is SRMSGELQSH…TNTSHRRILE (104 aa). An Omega-N-methylarginine modification is found at R523. The span at 547–556 shows a compositional bias: gly residues; that stretch reads GSYGGSGRSG. Positions 547 to 578 are disordered; that stretch reads GSYGGSGRSGRGSSRVQIIQTSTNTSHRRILE. The span at 562–571 shows a compositional bias: polar residues; that stretch reads VQIIQTSTNT.

This sequence belongs to the intermediate filament family. Post-translationally, undergoes deimination of some arginine residues (citrullination). As to expression, expressed exclusively in skin.

The polypeptide is Keratin, type II cytoskeletal 1b (KRT77) (Homo sapiens (Human)).